Here is a 614-residue protein sequence, read N- to C-terminus: Glutamine--fructose-6-phosphate aminotransferase [isomerizing] (614 aa).

The active-site Nucleophile; for GATase activity is C2. Positions 2–221 (CGIVGYIGKR…DGEIAVINRG (220 aa)) constitute a Glutamine amidotransferase type-2 domain. SIS domains lie at 291–430 (YKEK…EKGT) and 463–604 (LSKT…VDQP). Catalysis depends on K609, which acts as the For Fru-6P isomerization activity.

In terms of assembly, homodimer.

It localises to the cytoplasm. It catalyses the reaction D-fructose 6-phosphate + L-glutamine = D-glucosamine 6-phosphate + L-glutamate. Its function is as follows. Catalyzes the first step in hexosamine metabolism, converting fructose-6P into glucosamine-6P using glutamine as a nitrogen source. The polypeptide is Glutamine--fructose-6-phosphate aminotransferase [isomerizing] (Bacteroides thetaiotaomicron (strain ATCC 29148 / DSM 2079 / JCM 5827 / CCUG 10774 / NCTC 10582 / VPI-5482 / E50)).